The sequence spans 554 residues: Formate--tetrahydrofolate ligase (554 aa).

Residue 64-71 (TPYGEGKT) participates in ATP binding.

The protein belongs to the formate--tetrahydrofolate ligase family.

The enzyme catalyses (6S)-5,6,7,8-tetrahydrofolate + formate + ATP = (6R)-10-formyltetrahydrofolate + ADP + phosphate. It functions in the pathway one-carbon metabolism; tetrahydrofolate interconversion. The polypeptide is Formate--tetrahydrofolate ligase (Caldicellulosiruptor saccharolyticus (strain ATCC 43494 / DSM 8903 / Tp8T 6331)).